The chain runs to 431 residues: Serine hydroxymethyltransferase (431 aa).

Residues Leu127 and 131–133 (GHL) each bind (6S)-5,6,7,8-tetrahydrofolate. Lys236 carries the post-translational modification N6-(pyridoxal phosphate)lysine.

The protein belongs to the SHMT family. In terms of assembly, homodimer. It depends on pyridoxal 5'-phosphate as a cofactor.

Its subcellular location is the cytoplasm. The enzyme catalyses (6R)-5,10-methylene-5,6,7,8-tetrahydrofolate + glycine + H2O = (6S)-5,6,7,8-tetrahydrofolate + L-serine. It participates in one-carbon metabolism; tetrahydrofolate interconversion. The protein operates within amino-acid biosynthesis; glycine biosynthesis; glycine from L-serine: step 1/1. Its function is as follows. Catalyzes the reversible interconversion of serine and glycine with tetrahydrofolate (THF) serving as the one-carbon carrier. This reaction serves as the major source of one-carbon groups required for the biosynthesis of purines, thymidylate, methionine, and other important biomolecules. Also exhibits THF-independent aldolase activity toward beta-hydroxyamino acids, producing glycine and aldehydes, via a retro-aldol mechanism. This Granulibacter bethesdensis (strain ATCC BAA-1260 / CGDNIH1) protein is Serine hydroxymethyltransferase.